We begin with the raw amino-acid sequence, 445 residues long: ATP-dependent protease ATPase subunit HslU (445 aa).

ATP contacts are provided by residues I17, 59–64 (GVGKTE), D254, E319, and R391.

This sequence belongs to the ClpX chaperone family. HslU subfamily. A double ring-shaped homohexamer of HslV is capped on each side by a ring-shaped HslU homohexamer. The assembly of the HslU/HslV complex is dependent on binding of ATP.

Its subcellular location is the cytoplasm. Its function is as follows. ATPase subunit of a proteasome-like degradation complex; this subunit has chaperone activity. The binding of ATP and its subsequent hydrolysis by HslU are essential for unfolding of protein substrates subsequently hydrolyzed by HslV. HslU recognizes the N-terminal part of its protein substrates and unfolds these before they are guided to HslV for hydrolysis. This is ATP-dependent protease ATPase subunit HslU from Pseudomonas fluorescens (strain SBW25).